We begin with the raw amino-acid sequence, 328 residues long: WUSCHEL-related homeobox 6 (328 aa).

The span at 1–11 (MEGSSNSPDRQ) shows a compositional bias: polar residues. A disordered region spans residues 1-45 (MEGSSNSPDRQSSGGSPPEERGGGGSGGGGGRSAAGEPVRSRWTP). Gly residues predominate over residues 23 to 33 (GGGSGGGGGRS). Residues 38-102 (PVRSRWTPKP…NRRSRSRRRQ (65 aa)) constitute a DNA-binding region (homeobox; WUS-type).

It belongs to the WUS homeobox family.

It is found in the nucleus. Functionally, transcription factor which may be involved in developmental processes. The polypeptide is WUSCHEL-related homeobox 6 (WOX6) (Oryza sativa subsp. indica (Rice)).